The sequence spans 103 residues: Small ribosomal subunit protein uS10 (103 aa).

Belongs to the universal ribosomal protein uS10 family. Part of the 30S ribosomal subunit.

Involved in the binding of tRNA to the ribosomes. The polypeptide is Small ribosomal subunit protein uS10 (Novosphingobium aromaticivorans (strain ATCC 700278 / DSM 12444 / CCUG 56034 / CIP 105152 / NBRC 16084 / F199)).